A 436-amino-acid chain; its full sequence is Elongation factor 1-alpha (436 aa).

The region spanning 8 to 232 (KPHLNMIVTG…DDFKMAEKPV (225 aa)) is the tr-type G domain. The G1 stretch occupies residues 17-24 (GHIDNGKS). 17 to 24 (GHIDNGKS) is a binding site for GTP. Mg(2+) is bound at residue serine 24. The interval 74 to 78 (GITID) is G2. Positions 95 to 98 (DAPG) are G3. Residues 95–99 (DAPGH) and 157–160 (NKMD) each bind GTP. Positions 157-160 (NKMD) are G4. The segment at 196–198 (SGW) is G5.

This sequence belongs to the TRAFAC class translation factor GTPase superfamily. Classic translation factor GTPase family. EF-Tu/EF-1A subfamily.

It localises to the cytoplasm. The catalysed reaction is GTP + H2O = GDP + phosphate + H(+). Its function is as follows. GTP hydrolase that promotes the GTP-dependent binding of aminoacyl-tRNA to the A-site of ribosomes during protein biosynthesis. This is Elongation factor 1-alpha from Cenarchaeum symbiosum (strain A).